The primary structure comprises 81 residues: MRKLALAAIQFYRYAISPLMANHCRFHPSCSCYAHEAISTHGLLRGGWLSLRRLGRCHPWNPGGYDPVPPIKTSRSSSMAE.

The disordered stretch occupies residues 59-81; sequence PWNPGGYDPVPPIKTSRSSSMAE.

The protein belongs to the UPF0161 family.

The protein localises to the cell inner membrane. Functionally, could be involved in insertion of integral membrane proteins into the membrane. This Azotobacter vinelandii (strain DJ / ATCC BAA-1303) protein is Putative membrane protein insertion efficiency factor.